A 155-amino-acid polypeptide reads, in one-letter code: Endoribonuclease YbeY (155 aa).

3 residues coordinate Zn(2+): H120, H124, and H130.

Belongs to the endoribonuclease YbeY family. Zn(2+) is required as a cofactor.

It localises to the cytoplasm. Single strand-specific metallo-endoribonuclease involved in late-stage 70S ribosome quality control and in maturation of the 3' terminus of the 16S rRNA. The chain is Endoribonuclease YbeY from Staphylococcus aureus (strain MSSA476).